The primary structure comprises 387 residues: Cytochrome b (387 aa).

4 consecutive transmembrane segments (helical) span residues 32 to 52, 76 to 98, 113 to 133, and 179 to 199; these read FGSL…TLAM, WLVR…LHIG, VWAI…LGYV, and FFAL…MHLI. The heme b site is built by His-82 and His-96. Heme b-binding residues include His-183 and His-197. His-202 contributes to the a ubiquinone binding site. 4 helical membrane passes run 226–246, 290–310, 322–342, and 349–369; these read YLFK…SFVF, LLGV…PITD, LSKF…KLGA, and FIEL…IIVP.

It belongs to the cytochrome b family. Fungal cytochrome b-c1 complex contains 10 subunits; 3 respiratory subunits, 2 core proteins and 5 low-molecular weight proteins. Cytochrome b-c1 complex is a homodimer. Heme b serves as cofactor.

Its subcellular location is the mitochondrion inner membrane. Functionally, component of the ubiquinol-cytochrome c reductase complex (complex III or cytochrome b-c1 complex) that is part of the mitochondrial respiratory chain. The b-c1 complex mediates electron transfer from ubiquinol to cytochrome c. Contributes to the generation of a proton gradient across the mitochondrial membrane that is then used for ATP synthesis. The sequence is that of Cytochrome b (COB) from Podospora anserina (strain S / ATCC MYA-4624 / DSM 980 / FGSC 10383) (Pleurage anserina).